The chain runs to 285 residues: MFNWVKTAMLMAAITALFIVIGGMIGGSRGMTIALLFALGMNFFSYWFSDKMVLRMYNAQEVDENTAPQFYRMVRELATRANLPMPRVYLINEDAPNAFATGRNPEHAAVAATTGILRVLSEREMRGVMAHELAHVKHRDILISTITATMAGAISAIANFAMFFGGRDENGRPANPIAGIAVALLAPIAGALIQMAISRAREFEADRGGAQISGDPQSLATALDKIHRYAAGIPFQAAEQHPATAQMMIMNPLHGGGLQNLFSTHPATEERIARLMEMARTGRFD.

2 helical membrane passes run 7-27 and 30-50; these read TAML…MIGG and GMTI…WFSD. Histidine 131 is a Zn(2+) binding site. Residue glutamate 132 is part of the active site. Histidine 135 is a binding site for Zn(2+). 2 helical membrane-spanning segments follow: residues 146–166 and 177–197; these read ITAT…FFGG and IAGI…QMAI. A Zn(2+)-binding site is contributed by glutamate 202.

The protein belongs to the peptidase M48B family. It depends on Zn(2+) as a cofactor.

It is found in the cell inner membrane. This is Protease HtpX homolog from Burkholderia lata (strain ATCC 17760 / DSM 23089 / LMG 22485 / NCIMB 9086 / R18194 / 383).